Consider the following 223-residue polypeptide: Endonuclease V (223 aa).

Positions 35 and 103 each coordinate Mg(2+).

It belongs to the endonuclease V family. Requires Mg(2+) as cofactor.

The protein resides in the cytoplasm. The catalysed reaction is Endonucleolytic cleavage at apurinic or apyrimidinic sites to products with a 5'-phosphate.. Its function is as follows. DNA repair enzyme involved in the repair of deaminated bases. Selectively cleaves double-stranded DNA at the second phosphodiester bond 3' to a deoxyinosine leaving behind the intact lesion on the nicked DNA. This is Endonuclease V from Klebsiella pneumoniae subsp. pneumoniae (strain ATCC 700721 / MGH 78578).